The chain runs to 146 residues: Ribosome maturation factor RimP (146 aa).

This sequence belongs to the RimP family.

The protein resides in the cytoplasm. In terms of biological role, required for maturation of 30S ribosomal subunits. This is Ribosome maturation factor RimP from Dechloromonas aromatica (strain RCB).